The chain runs to 521 residues: Exoglucanase 1 (521 aa).

An N-terminal signal peptide occupies residues 1–17; sequence MLAKFAALAALVASANA. The catalytic stretch occupies residues 18–450; the sequence is QAVCSLTAET…FGPIGSTFSG (433 aa). Asn-32 carries an N-linked (GlcNAc...) asparagine glycan. Glu-229 functions as the Nucleophile in the catalytic mechanism. Catalysis depends on Glu-234, which acts as the Proton donor. Asn-287 carries an N-linked (GlcNAc...) asparagine glycan. The segment at 447–486 is disordered; it reads TFSGGSSGTPPSNPSSSVKPVTSTAKPSSTSTASNPSGTG. A linker region spans residues 451-485; it reads GSSGTPPSNPSSSVKPVTSTAKPSSTSTASNPSGT. One can recognise a CBM1 domain in the interval 485-521; sequence TGAAHWAQCGGIGFSGPTTCQSPYTCQKINDYYSQCV. Cystine bridges form between Cys-493-Cys-510 and Cys-504-Cys-520.

The protein belongs to the glycosyl hydrolase 7 (cellulase C) family.

The protein localises to the secreted. The enzyme catalyses Hydrolysis of (1-&gt;4)-beta-D-glucosidic linkages in cellulose and cellotetraose, releasing cellobiose from the non-reducing ends of the chains.. This Neurospora crassa (strain ATCC 24698 / 74-OR23-1A / CBS 708.71 / DSM 1257 / FGSC 987) protein is Exoglucanase 1 (cbh-1).